A 188-amino-acid polypeptide reads, in one-letter code: Adrenodoxin, mitochondrial (188 aa).

Residues Met1 to Arg64 constitute a mitochondrion transit peptide. Phosphoserine is present on Ser67. Residues Asp69–Val175 enclose the 2Fe-2S ferredoxin-type domain. N6-acetyllysine; alternate is present on Lys70. At Lys70 the chain carries N6-succinyllysine; alternate. Cys110, Cys116, Cys119, and Cys156 together coordinate [2Fe-2S] cluster. Residue Lys162 is modified to N6-succinyllysine. Residue Ser181 is modified to Phosphoserine.

Belongs to the adrenodoxin/putidaredoxin family. In terms of assembly, interacts with CYP11A1. [2Fe-2S] cluster serves as cofactor. As to expression, found in all tissues, most abundant in adrenals, ovaries and testes.

It localises to the mitochondrion matrix. Essential for the synthesis of various steroid hormones. Participates in the reduction of mitochondrial cytochrome P450 for steroidogenesis. Transfers electrons from adrenodoxin reductase to CYP11A1, a cytochrome P450 that catalyzes cholesterol side-chain cleavage. Does not form a ternary complex with adrenodoxin reductase and CYP11A1 but shuttles between the two enzymes to transfer electrons. This chain is Adrenodoxin, mitochondrial (Fdx1), found in Rattus norvegicus (Rat).